The chain runs to 664 residues: CRISPR-associated DNA-binding protein Cas12m (664 aa).

The tract at residues 1–137 (MKRVTITIDG…AKYRELIGSD (137 aa)) is recognition domain (REC1-N). Residues 138–212 (EETAQMDTEI…AAKDRIRAAG (75 aa)) form a recognition domain (REC2) region. The interval 213 to 270 (NDIENLEKDRQAAVIKAYNNSGLWWGNYNAVLESYKKARIKALKDGAELKYHRFDGSG) is recognition domain (REC1-C). Positions 271 to 390 (RFTNQIQGGM…VWSVVFTFTT (120 aa)) are wedge domain (WED). The linker stretch occupies residues 391–404 (DCPTYDQRSSTGNR). Positions 405–618 (CGLNLGWKKQ…KNGTQIEQVS (214 aa)) are ruvC-I. The tract at residues 618-650 (STASSATCSACKGKMEQVDGIMWRCRECRALVD) is target nucleic-acid binding (TNB). Zn(2+) contacts are provided by Cys625, Cys628, Cys642, and Cys645. Residues 651–664 (QDINAAANLFREVL) are ruvC-II. Asp652 contributes to the Mg(2+) binding site.

Belongs to the CRISPR-associated DNA-binding protein Cas12m family. It depends on Mg(2+) as a cofactor. Zn(2+) is required as a cofactor.

CRISPR (clustered regularly interspaced short palindromic repeat), is an adaptive immune system that provides protection against mobile genetic elements (viruses, transposable elements and conjugative plasmids). CRISPR clusters contain sequences complementary to antecedent mobile elements and target invading nucleic acids. CRISPR clusters are transcribed and processed into CRISPR RNA (crRNA). Recognizes a short motif in the CRISPR repeat sequences (the 5' PAM or protospacer adjacent motif, 5'-CCN-3' in this organism) to help distinguish self versus nonself, as targets within the bacterial CRISPR locus do not have PAMs. Cas12m-crRNA binds DNA in a PAM-dependent, crRNA-guided fashion. DNA-binding probably inhibits transcription, leading to gene silencing. Upon expression in E.coli as a CRISPR region preferentially binds to its associated crRNA. Probably required for pre-crRNA processing to mature crRNA. In Pelobacter propionicus (strain DSM 2379 / NBRC 103807 / OttBd1), this protein is CRISPR-associated DNA-binding protein Cas12m.